Here is a 210-residue protein sequence, read N- to C-terminus: Glutathione S-transferase P (210 aa).

In terms of domain architecture, GST N-terminal spans 2–81 (PPYTIVYFPV…HLGRTLGLYG (80 aa)). Phosphotyrosine; by EGFR is present on Y4. Glutathione is bound by residues Y8, R14, W39, K45, and 52 to 53 (QL). Position 62 is a phosphothreonine (T62). Residue 65–66 (QS) coordinates glutathione. Residues 83–204 (DQQEAALVDM…ASPEHMNRPI (122 aa)) enclose the GST C-terminal domain. K103 and K116 each carry N6-succinyllysine. K128 carries the N6-acetyllysine modification.

It belongs to the GST superfamily. Pi family. Homodimer. Interacts with CDK5.

Its subcellular location is the cytoplasm. It localises to the mitochondrion. The protein resides in the nucleus. The enzyme catalyses RX + glutathione = an S-substituted glutathione + a halide anion + H(+). The catalysed reaction is prostaglandin J2 + glutathione = prostaglandin J2-S-(R)-glutathione. It catalyses the reaction prostaglandin J2 + glutathione = prostaglandin J2-S-(S)-glutathione. It carries out the reaction prostaglandin A2 + glutathione = prostaglandin A2-S-(S)-glutathione. The enzyme catalyses 11(S)-hydroxy-14(S),15(S)-epoxy-(5Z,8Z,12E)-eicosatrienoate + glutathione = (11S,15S)-dihydroxy-14(R)-S-glutathionyl-(5Z,8Z,12E)-eicosatrienoate. Functionally, conjugation of reduced glutathione to a wide number of exogenous and endogenous hydrophobic electrophiles. Involved in the formation of glutathione conjugates of both prostaglandin A2 (PGA2) and prostaglandin J2 (PGJ2). Participates in the formation of novel hepoxilin regioisomers. Negatively regulates CDK5 activity via p25/p35 translocation to prevent neurodegeneration. The sequence is that of Glutathione S-transferase P (GSTP1) from Bos taurus (Bovine).